A 345-amino-acid polypeptide reads, in one-letter code: Isopentenyl-diphosphate delta-isomerase (345 aa).

Arg14–Lys15 is a binding site for substrate. FMN contacts are provided by residues Ser71, Ser72–Thr74, Ser102, and Asn130. Ser102–Arg104 contributes to the substrate binding site. Gln165 is a substrate binding site. Glu166 contributes to the Mg(2+) binding site. FMN contacts are provided by residues Lys197, Thr227, Gly277–Lys279, and Ala298–Gly299.

This sequence belongs to the IPP isomerase type 2 family. Homooctamer. Dimer of tetramers. FMN is required as a cofactor. Requires NADPH as cofactor. Mg(2+) serves as cofactor.

The protein resides in the cytoplasm. The catalysed reaction is isopentenyl diphosphate = dimethylallyl diphosphate. Involved in the biosynthesis of isoprenoids. Catalyzes the 1,3-allylic rearrangement of the homoallylic substrate isopentenyl (IPP) to its allylic isomer, dimethylallyl diphosphate (DMAPP). The protein is Isopentenyl-diphosphate delta-isomerase of Rickettsia felis (strain ATCC VR-1525 / URRWXCal2) (Rickettsia azadi).